A 282-amino-acid chain; its full sequence is NADPH-dependent 7-cyano-7-deazaguanine reductase (282 aa).

88–90 (IES) contacts substrate. 90-91 (SK) lines the NADPH pocket. The active-site Thioimide intermediate is Cys-190. Asp-197 serves as the catalytic Proton donor. A substrate-binding site is contributed by 229–230 (HE). An NADPH-binding site is contributed by 258–259 (RG).

The protein belongs to the GTP cyclohydrolase I family. QueF type 2 subfamily. Homodimer.

The protein resides in the cytoplasm. It catalyses the reaction 7-aminomethyl-7-carbaguanine + 2 NADP(+) = 7-cyano-7-deazaguanine + 2 NADPH + 3 H(+). It functions in the pathway tRNA modification; tRNA-queuosine biosynthesis. Functionally, catalyzes the NADPH-dependent reduction of 7-cyano-7-deazaguanine (preQ0) to 7-aminomethyl-7-deazaguanine (preQ1). This is NADPH-dependent 7-cyano-7-deazaguanine reductase from Salmonella heidelberg (strain SL476).